The sequence spans 502 residues: Glycerol kinase (502 aa).

ADP is bound at residue threonine 14. Residues threonine 14, threonine 15, and serine 16 each coordinate ATP. Threonine 14 contacts sn-glycerol 3-phosphate. Arginine 18 contributes to the ADP binding site. Sn-glycerol 3-phosphate is bound by residues arginine 84, glutamate 85, and tyrosine 136. Residues arginine 84, glutamate 85, and tyrosine 136 each coordinate glycerol. Histidine 232 bears the Phosphohistidine; by HPr mark. Aspartate 246 serves as a coordination point for sn-glycerol 3-phosphate. 2 residues coordinate glycerol: aspartate 246 and glutamine 247. ADP-binding residues include threonine 268 and glycine 311. Positions 268, 311, 315, and 412 each coordinate ATP. Residues glycine 412 and asparagine 416 each contribute to the ADP site.

Belongs to the FGGY kinase family. As to quaternary structure, homotetramer and homodimer (in equilibrium). Post-translationally, the phosphoenolpyruvate-dependent sugar phosphotransferase system (PTS), including enzyme I, and histidine-containing protein (HPr) are required for the phosphorylation, which leads to the activation of the enzyme.

The enzyme catalyses glycerol + ATP = sn-glycerol 3-phosphate + ADP + H(+). It participates in polyol metabolism; glycerol degradation via glycerol kinase pathway; sn-glycerol 3-phosphate from glycerol: step 1/1. With respect to regulation, activated by phosphorylation and inhibited by fructose 1,6-bisphosphate (FBP). In terms of biological role, key enzyme in the regulation of glycerol uptake and metabolism. Catalyzes the phosphorylation of glycerol to yield sn-glycerol 3-phosphate. This is Glycerol kinase from Streptococcus pneumoniae serotype 19F (strain G54).